The following is a 351-amino-acid chain: Translation initiation factor eIF2B subunit beta (351 aa).

Belongs to the eIF-2B alpha/beta/delta subunits family. As to quaternary structure, component of the translation initiation factor 2B (eIF2B) complex which is a heterodecamer of two sets of five different subunits: alpha, beta, gamma, delta and epsilon. Subunits alpha, beta and delta comprise a regulatory subcomplex and subunits epsilon and gamma comprise a catalytic subcomplex. Within the complex, the hexameric regulatory complex resides at the center, with the two heterodimeric catalytic subcomplexes bound on opposite sides.

The protein resides in the cytoplasm. Its subcellular location is the cytosol. Activated by the chemical integrated stress response (ISR) inhibitor ISRIB which stimulates guanine nucleotide exchange factor activity for both phosphorylated and unphosphorylated eIF2. Acts as a component of the translation initiation factor 2B (eIF2B) complex, which catalyzes the exchange of GDP for GTP on eukaryotic initiation factor 2 (eIF2) gamma subunit. Its guanine nucleotide exchange factor activity is repressed when bound to eIF2 complex phosphorylated on the alpha subunit, thereby limiting the amount of methionyl-initiator methionine tRNA available to the ribosome and consequently global translation is repressed. The sequence is that of Translation initiation factor eIF2B subunit beta (EIF2B2) from Bos taurus (Bovine).